The primary structure comprises 882 residues: Alanine--tRNA ligase (882 aa).

Zn(2+) is bound by residues His-574, His-578, Cys-682, and His-686. Positions 853–882 are disordered; sequence GGRGGGKGALAQGGGLDPRKAREALPGLLP. Residues 854 to 868 show a composition bias toward gly residues; sequence GRGGGKGALAQGGGL.

This sequence belongs to the class-II aminoacyl-tRNA synthetase family. Zn(2+) serves as cofactor.

It is found in the cytoplasm. It catalyses the reaction tRNA(Ala) + L-alanine + ATP = L-alanyl-tRNA(Ala) + AMP + diphosphate. Functionally, catalyzes the attachment of alanine to tRNA(Ala) in a two-step reaction: alanine is first activated by ATP to form Ala-AMP and then transferred to the acceptor end of tRNA(Ala). Also edits incorrectly charged Ser-tRNA(Ala) and Gly-tRNA(Ala) via its editing domain. This Thermus thermophilus (strain ATCC BAA-163 / DSM 7039 / HB27) protein is Alanine--tRNA ligase.